Consider the following 337-residue polypeptide: Holliday junction branch migration complex subunit RuvB (337 aa).

The segment at 1–180 is large ATPase domain (RuvB-L); sequence MTRLISADKS…FGVISRLEFY (180 aa). ATP-binding positions include Leu19, Arg20, Gly61, Lys64, Thr65, Thr66, 127–129, Arg170, Tyr180, and Arg217; that span reads EDF. Thr65 serves as a coordination point for Mg(2+). A small ATPAse domain (RuvB-S) region spans residues 181 to 251; that stretch reads THEELAFIIT…VADQALALLE (71 aa). Residues 254–337 are head domain (RuvB-H); the sequence is DMGFDMMDRA…APEPPQGKLF (84 aa). DNA contacts are provided by Arg309 and Arg314.

This sequence belongs to the RuvB family. As to quaternary structure, homohexamer. Forms an RuvA(8)-RuvB(12)-Holliday junction (HJ) complex. HJ DNA is sandwiched between 2 RuvA tetramers; dsDNA enters through RuvA and exits via RuvB. An RuvB hexamer assembles on each DNA strand where it exits the tetramer. Each RuvB hexamer is contacted by two RuvA subunits (via domain III) on 2 adjacent RuvB subunits; this complex drives branch migration. In the full resolvosome a probable DNA-RuvA(4)-RuvB(12)-RuvC(2) complex forms which resolves the HJ.

Its subcellular location is the cytoplasm. The enzyme catalyses ATP + H2O = ADP + phosphate + H(+). In terms of biological role, the RuvA-RuvB-RuvC complex processes Holliday junction (HJ) DNA during genetic recombination and DNA repair, while the RuvA-RuvB complex plays an important role in the rescue of blocked DNA replication forks via replication fork reversal (RFR). RuvA specifically binds to HJ cruciform DNA, conferring on it an open structure. The RuvB hexamer acts as an ATP-dependent pump, pulling dsDNA into and through the RuvAB complex. RuvB forms 2 homohexamers on either side of HJ DNA bound by 1 or 2 RuvA tetramers; 4 subunits per hexamer contact DNA at a time. Coordinated motions by a converter formed by DNA-disengaged RuvB subunits stimulates ATP hydrolysis and nucleotide exchange. Immobilization of the converter enables RuvB to convert the ATP-contained energy into a lever motion, pulling 2 nucleotides of DNA out of the RuvA tetramer per ATP hydrolyzed, thus driving DNA branch migration. The RuvB motors rotate together with the DNA substrate, which together with the progressing nucleotide cycle form the mechanistic basis for DNA recombination by continuous HJ branch migration. Branch migration allows RuvC to scan DNA until it finds its consensus sequence, where it cleaves and resolves cruciform DNA. In Citrifermentans bemidjiense (strain ATCC BAA-1014 / DSM 16622 / JCM 12645 / Bem) (Geobacter bemidjiensis), this protein is Holliday junction branch migration complex subunit RuvB.